The sequence spans 379 residues: DNA-directed RNA polymerase subunit Rpo1C (379 aa).

The protein belongs to the RNA polymerase beta' chain family. As to quaternary structure, part of the RNA polymerase complex.

It localises to the cytoplasm. It catalyses the reaction RNA(n) + a ribonucleoside 5'-triphosphate = RNA(n+1) + diphosphate. Functionally, DNA-dependent RNA polymerase (RNAP) catalyzes the transcription of DNA into RNA using the four ribonucleoside triphosphates as substrates. Forms part of the jaw domain. This Pyrobaculum aerophilum (strain ATCC 51768 / DSM 7523 / JCM 9630 / CIP 104966 / NBRC 100827 / IM2) protein is DNA-directed RNA polymerase subunit Rpo1C.